Consider the following 209-residue polypeptide: Pyrrolidone-carboxylate peptidase (209 aa).

Residues Glu79, Cys142, and His164 contribute to the active site.

This sequence belongs to the peptidase C15 family. As to quaternary structure, homotetramer.

The protein resides in the cytoplasm. The catalysed reaction is Release of an N-terminal pyroglutamyl group from a polypeptide, the second amino acid generally not being Pro.. Removes 5-oxoproline from various penultimate amino acid residues except L-proline. The protein is Pyrrolidone-carboxylate peptidase of Saccharolobus islandicus (strain Y.N.15.51 / Yellowstone #2) (Sulfolobus islandicus).